Consider the following 352-residue polypeptide: C-C chemokine receptor type 5 (352 aa).

The Extracellular segment spans residues 1 to 30 (MDYQVSSPTYDIDYYTSEPCQKVNVKQIAA). Residue Tyr3 is modified to Sulfotyrosine. O-linked (GalNAc...) serine glycans are attached at residues Ser6 and Ser7. Tyr10, Tyr14, and Tyr15 each carry sulfotyrosine. 2 disulfide bridges follow: Cys20–Cys269 and Cys101–Cys178. A helical transmembrane segment spans residues 31-58 (RLLPPLYSLVFIFGFVGNILVVLILINC). Over 59-68 (KRLKSMTDIY) the chain is Cytoplasmic. A helical membrane pass occupies residues 69 to 89 (LLNLAISDLFFLLTVPFWAHY). At 90 to 102 (AAAQWDFGNTMCQ) the chain is on the extracellular side. The helical transmembrane segment at 103–124 (LLTGLYFIGFFSGIFFIILLTI) threads the bilayer. Residues 125 to 141 (DRYLAIVHAVFALKART) lie on the Cytoplasmic side of the membrane. Residues 142–166 (VTFGVVTSVITWVVAVFASLPGIIF) form a helical membrane-spanning segment. At 167–198 (TRSQREGVHYTCSSHFPYSQYQFWKNFQTLKI) the chain is on the extracellular side. A helical transmembrane segment spans residues 199–218 (VILGLVLPLLVMVICYSGIL). At 219-235 (KTLLRCRNEKKRHRAVR) the chain is on the cytoplasmic side. The chain crosses the membrane as a helical span at residues 236-260 (LIFTIMIVYFLFWAPYNIVLLLNTF). The Extracellular segment spans residues 261 to 277 (QEFFGLNNCSSSNRLDQ). Residues 278 to 301 (AMQVTETLGMTHCCINPIIYAFVG) traverse the membrane as a helical segment. Over 302-352 (EKFRNYLLVFFQKHIAKRFCKCCSIFQQEAPERASSVYTRSTGEQETSVGL) the chain is Cytoplasmic. S-palmitoyl cysteine attachment occurs at residues Cys321, Cys323, and Cys324. Ser336, Ser337, Ser342, and Ser349 each carry phosphoserine; by BARK1.

The protein belongs to the G-protein coupled receptor 1 family. In terms of assembly, interacts with PRAF2. Efficient ligand binding to CCL3/MIP-1alpha and CCL4/MIP-1beta requires sulfation, O-glycosylation and sialic acid modifications. Glycosylation on Ser-6 is required for efficient binding of CCL4. Interacts with GRK2. Interacts with ARRB1 and ARRB2. Interacts with CNIH4. Interacts with S100A4; this interaction stimulates T-lymphocyte chemotaxis. Post-translationally, sulfated on at least 2 of the N-terminal tyrosines. Sulfation is required for efficient binding of the chemokines, CCL3 and CCL4. Palmitoylation in the C-terminal is important for cell surface expression. In terms of processing, phosphorylation on serine residues in the C-terminal is stimulated by binding CC chemokines especially by APO-RANTES. Post-translationally, O-glycosylated, but not N-glycosylated. Ser-6 appears to be the major site even if Ser-7 may be also O-glycosylated. Also sialylated glycans present which contribute to chemokine binding. Thr-16 and Ser-17 may also be glycosylated and, if so, with small moieties such as a T-antigen.

It is found in the cell membrane. Its function is as follows. Receptor for a number of inflammatory CC-chemokines including CCL3/MIP-1-alpha, CCL4/MIP-1-beta and RANTES and subsequently transduces a signal by increasing the intracellular calcium ion level. May play a role in the control of granulocytic lineage proliferation or differentiation. Participates in T-lymphocyte migration to the infection site by acting as a chemotactic receptor. The polypeptide is C-C chemokine receptor type 5 (CCR5) (Rhinopithecus avunculus (Tonkin snub-nosed monkey)).